Reading from the N-terminus, the 395-residue chain is MNQPWRTHLQTKLQQLHEQGQYRNLHVTEQAEETWLIRDEKRMLNLASNNYLGLSGDERLKEAAIASTRKYGAGATASRLVVGNYSLYEEVERSICDWKGTEKALVVSSGYTANVGVISSLACRHDIVFSDKLNHASIVDGIILSGAEHKRYRHNDLNHLEALLKTASPEKRKLIVTDTVFSMDGDTAYLRELVQLKEKYGAIIIVDEAHASGIYGIGGAGLSHIEKDLAQKIDIHMGTFSKALGCYGAYLTGDAIYIEYLQNMMRSFIFTTALPPSTLGAVQKAIEIVQEDHKRRENLIANGEYFRSKLREAGFNIGNSSTHIVPIVVGSNENTLRFSKRLQEAGIAAIAIRPPTVPVHSSRIRFAVTSEHTIADLKWAIERITHIAKEEELFV.

Arginine 23 contributes to the substrate binding site. Position 110–111 (110–111 (GY)) interacts with pyridoxal 5'-phosphate. A substrate-binding site is contributed by histidine 135. Pyridoxal 5'-phosphate is bound by residues serine 182, 207–210 (DEAH), and 239–242 (TFSK). N6-(pyridoxal phosphate)lysine is present on lysine 242. Threonine 356 contacts substrate.

Belongs to the class-II pyridoxal-phosphate-dependent aminotransferase family. BioF subfamily. As to quaternary structure, homodimer. Pyridoxal 5'-phosphate serves as cofactor.

The enzyme catalyses 6-carboxyhexanoyl-[ACP] + L-alanine + H(+) = (8S)-8-amino-7-oxononanoate + holo-[ACP] + CO2. Its pathway is cofactor biosynthesis; biotin biosynthesis. Functionally, catalyzes the decarboxylative condensation of pimeloyl-[acyl-carrier protein] and L-alanine to produce 8-amino-7-oxononanoate (AON), [acyl-carrier protein], and carbon dioxide. The chain is Putative 8-amino-7-oxononanoate synthase (bioF) from Bacillus cereus (strain ZK / E33L).